A 53-amino-acid polypeptide reads, in one-letter code: uncharacterized protein (53 aa).

This sequence belongs to the ELIP/psbS family.

The protein resides in the plastid. It localises to the chloroplast. Functionally, possible role in chlorophyll and/or carotenoid binding. This is an uncharacterized protein from Guillardia theta (Cryptophyte).